The following is a 473-amino-acid chain: 3-isopropylmalate dehydratase large subunit (473 aa).

[4Fe-4S] cluster is bound by residues Cys351, Cys414, and Cys417.

This sequence belongs to the aconitase/IPM isomerase family. LeuC type 1 subfamily. Heterodimer of LeuC and LeuD. [4Fe-4S] cluster is required as a cofactor.

It catalyses the reaction (2R,3S)-3-isopropylmalate = (2S)-2-isopropylmalate. It participates in amino-acid biosynthesis; L-leucine biosynthesis; L-leucine from 3-methyl-2-oxobutanoate: step 2/4. In terms of biological role, catalyzes the isomerization between 2-isopropylmalate and 3-isopropylmalate, via the formation of 2-isopropylmaleate. The sequence is that of 3-isopropylmalate dehydratase large subunit from Acidovorax ebreus (strain TPSY) (Diaphorobacter sp. (strain TPSY)).